A 1027-amino-acid polypeptide reads, in one-letter code: Contactin-5 (1027 aa).

The N-terminal stretch at 1–19 (MMWLSWKLFLFLSLIGCLS) is a signal peptide. 6 Ig-like C2-type domains span residues 32 to 117 (PDDV…AVLQ), 123 to 209 (NFSG…RVLS), 227 to 307 (PKIE…RNVF), 317 to 401 (PQWV…AELK), 407 to 494 (PTFP…ASVS), and 498 to 593 (PTRI…TELL). Cys50 and Cys100 are disulfide-bonded. N-linked (GlcNAc...) asparagine glycosylation is found at Asn65 and Asn123. Intrachain disulfides connect Cys144–Cys196 and Cys249–Cys296. 3 N-linked (GlcNAc...) asparagine glycosylation sites follow: Asn324, Asn376, and Asn467. 3 disulfides stabilise this stretch: Cys338–Cys385, Cys430–Cys478, and Cys520–Cys577. Fibronectin type-III domains follow at residues 600 to 698 (PPGV…TNEA), 703 to 800 (PPAN…SAEG), 805 to 899 (APID…TKKS), and 901 to 994 (PSQA…SYAG). Residues Asn706, Asn743, Asn858, and Asn929 are each glycosylated (N-linked (GlcNAc...) asparagine). Ser999 carries GPI-anchor amidated serine lipidation. Residues 1000 to 1027 (AQSTLHMFSTSSSSVTLLLVLMVPSTSW) constitute a propeptide, removed in mature form.

The protein belongs to the immunoglobulin superfamily. Contactin family. As to quaternary structure, interacts with INgCAM/L1 and the tenascin-R TNP protein. Does not interacts with NrCAM. In terms of tissue distribution, expressed by subpopulations of Purkinje cells in the cerebellum. Also expressed by one type of Purkinje cell afferents, the climbing fibers.

The protein resides in the cell membrane. In terms of biological role, contactins mediate cell surface interactions during nervous system development. May contribute to the formation of somatotopic maps of cerebellar afferents during the development of the nervous system. This Gallus gallus (Chicken) protein is Contactin-5 (CNTN5).